The following is a 215-amino-acid chain: UPF0173 metal-dependent hydrolase NEQ378 (215 aa).

The protein belongs to the UPF0173 family.

The chain is UPF0173 metal-dependent hydrolase NEQ378 from Nanoarchaeum equitans (strain Kin4-M).